The chain runs to 177 residues: Iron-sulfur cluster assembly protein SufA (177 aa).

An N-terminal signal peptide occupies residues methionine 1–alanine 18. [4Fe-4S] cluster-binding residues include cysteine 101, cysteine 169, and cysteine 171.

It belongs to the HesB/IscA family. Homodimer. Homotetramer formation is observed in vitro.

Its subcellular location is the plastid. It localises to the apicoplast. Its pathway is cofactor biosynthesis; iron-sulfur cluster biosynthesis. Functionally, participates in the sulfur mobilization (SUF) pathway for iron-sulfur (Fe-S) cluster biogenesis. Involved in the pre-assembly of [4Fe-4S] clusters and their transfer to target proteins. The sequence is that of Iron-sulfur cluster assembly protein SufA from Plasmodium falciparum (isolate 3D7).